A 461-amino-acid polypeptide reads, in one-letter code: Integrator complex subunit 12 (461 aa).

Residues 42–131 (GIDSSYRPTQ…PETRSSPITV (90 aa)) form a disordered region. Residue lysine 68 forms a Glycyl lysine isopeptide (Lys-Gly) (interchain with G-Cter in SUMO2) linkage. Basic and acidic residues predominate over residues 88-124 (TAEKIKKEAEKRPADKMKDVTEGIDVPKKPRLEKPET). The residue at position 127 (serine 127) is a Phosphoserine. Residues 158 to 214 (GLACVVCRQMTVASGNQLVECQECHNLYHQDCHKPQVTDKEVNDPRLVWYCARCTRQ) form a PHD-type zinc finger. A Glycyl lysine isopeptide (Lys-Gly) (interchain with G-Cter in SUMO2) cross-link involves residue lysine 253. The segment covering 302 to 328 (AGPSTAKLNSAAQNSSGKPAASSSNQK) has biased composition (polar residues). A disordered region spans residues 302–443 (AGPSTAKLNS…PTSQESQLNA (142 aa)). Low complexity-rich tracts occupy residues 348–357 (GSGNSTSPSV) and 381–436 (VSKV…GPTS).

Belongs to the Integrator subunit 12 family. As to quaternary structure, component of the Integrator complex, composed of core subunits INTS1, INTS2, INTS3, INTS4, INTS5, INTS6, INTS7, INTS8, INTS9/RC74, INTS10, INTS11/CPSF3L, INTS12, INTS13, INTS14 and INTS15. The core complex associates with protein phosphatase 2A subunits PPP2CA and PPP2R1A, to form the Integrator-PP2A (INTAC) complex. Dephosphorylated at Ser-127 by the PNUTS-PP1 complex, promoting RNA polymerase II transcription pause-release.

Its subcellular location is the nucleus. Its function is as follows. Component of the integrator complex, a multiprotein complex that terminates RNA polymerase II (Pol II) transcription in the promoter-proximal region of genes. The integrator complex provides a quality checkpoint during transcription elongation by driving premature transcription termination of transcripts that are unfavorably configured for transcriptional elongation: the complex terminates transcription by (1) catalyzing dephosphorylation of the C-terminal domain (CTD) of Pol II subunit POLR2A/RPB1 and SUPT5H/SPT5, (2) degrading the exiting nascent RNA transcript via endonuclease activity and (3) promoting the release of Pol II from bound DNA. The integrator complex is also involved in terminating the synthesis of non-coding Pol II transcripts, such as enhancer RNAs (eRNAs), small nuclear RNAs (snRNAs), telomerase RNAs and long non-coding RNAs (lncRNAs). Mediates recruitment of cytoplasmic dynein to the nuclear envelope, probably as component of the integrator complex. The chain is Integrator complex subunit 12 (Ints12) from Mus musculus (Mouse).